A 527-amino-acid polypeptide reads, in one-letter code: uncharacterized protein (527 aa).

The PE domain occupies methionine 1–threonine 93. 3 stretches are compositionally biased toward gly residues: residues isoleucine 264 to glycine 286, glycine 292 to glycine 384, and asparagine 472 to arginine 515. Disordered stretches follow at residues isoleucine 264 to glycine 384 and asparagine 472 to glutamine 527.

This sequence belongs to the mycobacterial PE family. PGRS subfamily.

This is an uncharacterized protein from Mycobacterium tuberculosis (strain CDC 1551 / Oshkosh).